The sequence spans 496 residues: Glycerol kinase (496 aa).

Thr-12 provides a ligand contact to ADP. Positions 12, 13, and 14 each coordinate ATP. Thr-12 provides a ligand contact to sn-glycerol 3-phosphate. Arg-16 contacts ADP. Sn-glycerol 3-phosphate-binding residues include Arg-82, Glu-83, and Tyr-134. 3 residues coordinate glycerol: Arg-82, Glu-83, and Tyr-134. His-230 carries the post-translational modification Phosphohistidine; by HPr. Asp-244 is a sn-glycerol 3-phosphate binding site. Positions 244 and 245 each coordinate glycerol. ADP is bound by residues Thr-266 and Gly-309. Residues Thr-266, Gly-309, Gln-313, and Gly-410 each coordinate ATP. ADP is bound by residues Gly-410 and Asn-414.

It belongs to the FGGY kinase family. Homotetramer and homodimer (in equilibrium). Post-translationally, the phosphoenolpyruvate-dependent sugar phosphotransferase system (PTS), including enzyme I, and histidine-containing protein (HPr) are required for the phosphorylation, which leads to the activation of the enzyme.

It carries out the reaction glycerol + ATP = sn-glycerol 3-phosphate + ADP + H(+). The protein operates within polyol metabolism; glycerol degradation via glycerol kinase pathway; sn-glycerol 3-phosphate from glycerol: step 1/1. Its activity is regulated as follows. Activated by phosphorylation and inhibited by fructose 1,6-bisphosphate (FBP). In terms of biological role, key enzyme in the regulation of glycerol uptake and metabolism. Catalyzes the phosphorylation of glycerol to yield sn-glycerol 3-phosphate. The sequence is that of Glycerol kinase from Bacillus anthracis (strain A0248).